The following is a 501-amino-acid chain: Sodium-coupled neutral amino acid symporter 2 (501 aa).

The tract at residues 1-26 (MSSAEMGKFDISPDEDSSSYSSNSND) is disordered. Residues 1 to 77 (MSSAEMGKFD…HPGTTSFGMS (77 aa)) are Cytoplasmic-facing. Residues 1–97 (MSSAEMGKFD…SGILGLSYAM (97 aa)) are regulates protein turnover upon amino acid deprivation. A helical transmembrane segment spans residues 78 to 97 (VFNLSNAIVGSGILGLSYAM). Asn-83 contacts Na(+). The Extracellular portion of the chain corresponds to 98–103 (ANTGIA). Residues 104-124 (LFVILLLVVSILSLYSVHLLL) form a helical membrane-spanning segment. The Cytoplasmic portion of the chain corresponds to 125 to 159 (KTANEGGSLLYEQLGMKAFGMPGKLAASGSITMQN). Residues 160-178 (IGAMSSYLFIVKYELPLVI) form a helical membrane-spanning segment. The Extracellular portion of the chain corresponds to 179–189 (KTFMNIEENAG). The helical transmembrane segment at 190–210 (HWYLNGDYLVLLVSVILILPL) threads the bilayer. Topologically, residues 211-218 (SLLKNLGY) are cytoplasmic. Residues 219 to 239 (LGYTSGFSLLCMVFFLIVVIW) traverse the membrane as a helical segment. At 240-287 (KMFQIPCPMESDIINATLINATLAPFADENITISDACKPEYFIFNSQT) the chain is on the extracellular side. A disulfide bond links Cys-246 and Cys-276. N-linked (GlcNAc...) asparagine glycans are attached at residues Asn-254 and Asn-259. The helical transmembrane segment at 288–308 (VYAVPILTFSFVCHPAILPIY) threads the bilayer. The Cytoplasmic portion of the chain corresponds to 309 to 324 (EELKSRSRKRMMNVSY). The chain crosses the membrane as a helical span at residues 325–345 (VSFFAMFLMYLLAALFGYLTF). At 346–366 (YGRVESELLHTYSAFLGADIL) the chain is on the extracellular side. The chain crosses the membrane as a helical span at residues 367-387 (LLIVRLAVLMAVTLTVPVVIF). Position 381 (Thr-381) interacts with Na(+). Over 388-408 (PIRSSVTQLLWAGKEFSWWRH) the chain is Cytoplasmic. A helical membrane pass occupies residues 409-429 (CSITVVLLAFTNVLVIFVPTI). Residues 430–431 (RD) lie on the Extracellular side of the membrane. The chain crosses the membrane as a helical span at residues 432 to 452 (IFGFIGASAAAMLIFILPSAF). The Cytoplasmic portion of the chain corresponds to 453–467 (YIKLVKKEPMKSVQK). Residues 468-490 (IGAALFFLSGILVMTGCMTLIIL) traverse the membrane as a helical segment. Residues 491-501 (DWIHTDASDGH) are Extracellular-facing.

This sequence belongs to the amino acid/polyamine transporter 2 family.

The protein localises to the cell membrane. The enzyme catalyses L-alanine(in) + Na(+)(in) = L-alanine(out) + Na(+)(out). It carries out the reaction glycine(in) + Na(+)(in) = glycine(out) + Na(+)(out). It catalyses the reaction L-serine(in) + Na(+)(in) = L-serine(out) + Na(+)(out). The catalysed reaction is L-proline(in) + Na(+)(in) = L-proline(out) + Na(+)(out). The enzyme catalyses L-methionine(in) + Na(+)(in) = L-methionine(out) + Na(+)(out). It carries out the reaction L-histidine(in) + Na(+)(in) = L-histidine(out) + Na(+)(out). It catalyses the reaction L-asparagine(in) + Na(+)(in) = L-asparagine(out) + Na(+)(out). The catalysed reaction is L-glutamine(in) + Na(+)(in) = L-glutamine(out) + Na(+)(out). The enzyme catalyses L-threonine(in) + Na(+)(in) = L-threonine(out) + Na(+)(out). It carries out the reaction L-leucine(in) + Na(+)(in) = L-leucine(out) + Na(+)(out). It catalyses the reaction L-phenylalanine(in) + Na(+)(in) = L-phenylalanine(out) + Na(+)(out). Its activity is regulated as follows. Inhibited by N-methyl-D-glucamine. Inhibited by choline. Allosteric regulation of sodium ions binding by pH. Its function is as follows. Symporter that cotransports neutral amino acids and sodium ions from the extracellular to the intracellular side of the cell membrane. The transport is pH-sensitive, Li(+)-intolerant, electrogenic, driven by the Na(+) electrochemical gradient and cotransports of neutral amino acids and sodium ions with a stoichiometry of 1:1. In Gallus gallus (Chicken), this protein is Sodium-coupled neutral amino acid symporter 2.